The chain runs to 310 residues: Transcriptional regulator NRG1 (310 aa).

The interval 85–131 (YYMGPPAQHRLPTPPPYPMSSPTTATAATPLSQQSPHLQPQQTLQQP) is disordered. Residues 104 to 131 (SSPTTATAATPLSQQSPHLQPQQTLQQP) are compositionally biased toward low complexity. 2 consecutive C2H2-type zinc fingers follow at residues 228 to 250 (HVCK…NRIH) and 256 to 280 (HQCP…YKTH).

The protein resides in the nucleus. In terms of biological role, transcriptional repressor that binds NRG1 response elements (NRE) of target promoters. Involved in regulation of chlamydospore formation, hyphal growth, virulence, and stress response. Plays a key role in regulating true hyphal growth, but does not regulate pseudohyphal growth in the same fashion. Directs transcriptional repression of a subset of filament-specific genes such as HWP1, HYR1, ALS8, HWP1, or ECE1; via the TUP1 pathway. Functions with UME6 in a negative feedback loop to control the level and duration of filament-specific gene expression in response to inducing conditions. Plays a key role in biofilm formation and dispersion. Also plays the role of a negative regulator of virulence in mice models. Required for the expression of the cell wall genes RBR1. The chain is Transcriptional regulator NRG1 (NRG1) from Candida albicans (strain SC5314 / ATCC MYA-2876) (Yeast).